The primary structure comprises 340 residues: Phosphoribosylformylglycinamidine cyclo-ligase (340 aa).

Belongs to the AIR synthase family.

It is found in the cytoplasm. It catalyses the reaction 2-formamido-N(1)-(5-O-phospho-beta-D-ribosyl)acetamidine + ATP = 5-amino-1-(5-phospho-beta-D-ribosyl)imidazole + ADP + phosphate + H(+). It participates in purine metabolism; IMP biosynthesis via de novo pathway; 5-amino-1-(5-phospho-D-ribosyl)imidazole from N(2)-formyl-N(1)-(5-phospho-D-ribosyl)glycinamide: step 2/2. This chain is Phosphoribosylformylglycinamidine cyclo-ligase, found in Streptococcus agalactiae serotype III (strain NEM316).